Reading from the N-terminus, the 606-residue chain is EPM2A-interacting protein 1 (606 aa).

A Phosphoserine modification is found at Ser-147.

In terms of assembly, interacts with EPM2A.

The protein localises to the endoplasmic reticulum. The protein is EPM2A-interacting protein 1 (Epm2aip1) of Mus musculus (Mouse).